Reading from the N-terminus, the 94-residue chain is Small ribosomal subunit protein uS17 (94 aa).

Belongs to the universal ribosomal protein uS17 family. As to quaternary structure, part of the 30S ribosomal subunit.

In terms of biological role, one of the primary rRNA binding proteins, it binds specifically to the 5'-end of 16S ribosomal RNA. The polypeptide is Small ribosomal subunit protein uS17 (Deinococcus geothermalis (strain DSM 11300 / CIP 105573 / AG-3a)).